The sequence spans 419 residues: Ribosome biogenesis protein NOP53 (419 aa).

Disordered regions lie at residues 1–21 (MGIKERNAPSQYKQSSRKNKR) and 233–283 (KAFE…KIRQ). Positions 233-261 (KAFEDKGLVSDQDVNHSIDSDDQSEHEQA) are enriched in basic and acidic residues. Phosphoserine is present on residues S242, S249, S252, and S256. The segment covering 269–283 (KNKRKTRSQRNKIRQ) has biased composition (basic residues).

The protein belongs to the NOP53 family.

It localises to the nucleus. It is found in the nucleolus. Its subcellular location is the nucleoplasm. In terms of biological role, may play a role in ribosome biogenesis. The sequence is that of Ribosome biogenesis protein NOP53 from Schizosaccharomyces pombe (strain 972 / ATCC 24843) (Fission yeast).